Consider the following 293-residue polypeptide: Group 3 late-embryogenesis abundant protein, mitochondrial (293 aa).

The N-terminal 31 residues, 1–31 (MFLARNAGRAGYRGVVAYQQAASFSVSSAKA), are a transit peptide targeting the mitochondrion. Residues 27–43 (SSAKAAGSRSSGGSDAG) show a composition bias toward low complexity. The segment at 27 to 52 (SSAKAAGSRSSGGSDAGDYAREAAEH) is disordered. LEA 11-mer repeat repeat units lie at residues 58-68 (KDLKNEASWKA), 83-93 (KDTVKEGVHDM), 123-133 (KNAAQDTAATL), 134-144 (KDKAGSAWNQA), 145-155 (KHVVEDKGEDV), 160-170 (KDTASKVWGKA), 171-181 (KHVAEDVKENA), 199-209 (KDKAADVLSGA), and 210-220 (KHTAENLAHKA). A disordered region spans residues 217–293 (AHKAQAAIHD…KGPGQAGGRR (77 aa)). Over residues 230–265 (SSGSQSQSQSQSQYRQGQQQGRQDQQQSKSQWGQTS) the composition is skewed to low complexity. Residues 279-293 (GPQGGKGPGQAGGRR) are compositionally biased toward gly residues.

It belongs to the LEA type 4 family.

It is found in the mitochondrion. Mitochondrial heat soluble protein acting as a molecular shield in water-deficient condition. This chain is Group 3 late-embryogenesis abundant protein, mitochondrial, found in Ramazzottius varieornatus (Water bear).